The sequence spans 370 residues: Dual-specificity RNA methyltransferase RlmN (370 aa).

The active-site Proton acceptor is E93. The Radical SAM core domain maps to 99–337 (EEGRGTLCVS…VTTVRKTRGD (239 aa)). C106 and C343 are joined by a disulfide. Residues C113, C117, and C120 each coordinate [4Fe-4S] cluster. S-adenosyl-L-methionine is bound by residues 167–168 (GE), S199, 221–223 (SLH), and N300. Residue C343 is the S-methylcysteine intermediate of the active site.

Belongs to the radical SAM superfamily. RlmN family. The cofactor is [4Fe-4S] cluster.

The protein resides in the cytoplasm. The catalysed reaction is adenosine(2503) in 23S rRNA + 2 reduced [2Fe-2S]-[ferredoxin] + 2 S-adenosyl-L-methionine = 2-methyladenosine(2503) in 23S rRNA + 5'-deoxyadenosine + L-methionine + 2 oxidized [2Fe-2S]-[ferredoxin] + S-adenosyl-L-homocysteine. It carries out the reaction adenosine(37) in tRNA + 2 reduced [2Fe-2S]-[ferredoxin] + 2 S-adenosyl-L-methionine = 2-methyladenosine(37) in tRNA + 5'-deoxyadenosine + L-methionine + 2 oxidized [2Fe-2S]-[ferredoxin] + S-adenosyl-L-homocysteine. Its function is as follows. Specifically methylates position 2 of adenine 2503 in 23S rRNA and position 2 of adenine 37 in tRNAs. m2A2503 modification seems to play a crucial role in the proofreading step occurring at the peptidyl transferase center and thus would serve to optimize ribosomal fidelity. This is Dual-specificity RNA methyltransferase RlmN from Francisella tularensis subsp. holarctica (strain LVS).